The primary structure comprises 271 residues: Putative protein FAM220BP (271 aa).

In Homo sapiens (Human), this protein is Putative protein FAM220BP (FAM220BP).